The primary structure comprises 336 residues: Tyrosine recombinase XerC (336 aa).

In terms of domain architecture, Core-binding (CB) spans 14–106; the sequence is VANCRWLGEF…SVKSFYRFLL (93 aa). In terms of domain architecture, Tyr recombinase spans 127–330; the sequence is KIPDFLSEEE…TFNRLRDAYT (204 aa). Residues Arg-183, Lys-207, His-282, Arg-285, and His-308 contribute to the active site. Residue Tyr-317 is the O-(3'-phospho-DNA)-tyrosine intermediate of the active site.

The protein belongs to the 'phage' integrase family. XerC subfamily. Forms a cyclic heterotetrameric complex composed of two molecules of XerC and two molecules of XerD.

It localises to the cytoplasm. Its function is as follows. Site-specific tyrosine recombinase, which acts by catalyzing the cutting and rejoining of the recombining DNA molecules. The XerC-XerD complex is essential to convert dimers of the bacterial chromosome into monomers to permit their segregation at cell division. It also contributes to the segregational stability of plasmids. The polypeptide is Tyrosine recombinase XerC (Chlorobaculum tepidum (strain ATCC 49652 / DSM 12025 / NBRC 103806 / TLS) (Chlorobium tepidum)).